A 133-amino-acid chain; its full sequence is Large ribosomal subunit protein bL20 (133 aa).

It belongs to the bacterial ribosomal protein bL20 family.

Binds directly to 23S ribosomal RNA and is necessary for the in vitro assembly process of the 50S ribosomal subunit. It is not involved in the protein synthesizing functions of that subunit. In Rubrobacter xylanophilus (strain DSM 9941 / JCM 11954 / NBRC 16129 / PRD-1), this protein is Large ribosomal subunit protein bL20.